The primary structure comprises 88 residues: Arminin 1b (88 aa).

The signal sequence occupies residues 1–18 (MKTVLAFLFLTFIAFTHA). The propeptide occupies 19–57 (ESYEDVKEEIKNEVEREIFEDLEEESDVLESNVRELNDA). V85 bears the Valine amide mark.

Belongs to the arminin family. As to expression, expressed in entodermal epithelium along the body column.

Its subcellular location is the secreted. The protein localises to the target cell membrane. In terms of biological role, antimicrobial peptide with a broad-spectrum antimicrobial activity. Keeps its antibacterial activity under a wide range of salt concentrations that mimic physiological conditions of human blood, which is surprising, since Hydra is an obligate freshwater animal with nearly no salt tolerance. Does not affect red blood cells. The chain is Arminin 1b from Hydra vulgaris (Hydra).